Here is a 301-residue protein sequence, read N- to C-terminus: Acetylglutamate kinase (301 aa).

Substrate-binding positions include 68–69 (GG), Arg-90, and Asn-197.

This sequence belongs to the acetylglutamate kinase family. ArgB subfamily.

It is found in the cytoplasm. The catalysed reaction is N-acetyl-L-glutamate + ATP = N-acetyl-L-glutamyl 5-phosphate + ADP. It functions in the pathway amino-acid biosynthesis; L-arginine biosynthesis; N(2)-acetyl-L-ornithine from L-glutamate: step 2/4. Catalyzes the ATP-dependent phosphorylation of N-acetyl-L-glutamate. This chain is Acetylglutamate kinase, found in Nitrosococcus oceani (strain ATCC 19707 / BCRC 17464 / JCM 30415 / NCIMB 11848 / C-107).